A 469-amino-acid polypeptide reads, in one-letter code: Adenosylhomocysteinase (469 aa).

Substrate is bound by residues Thr63, Asp139, and Glu164. Residue 165–167 coordinates NAD(+); it reads TTT. Substrate is bound by residues Lys194 and Asp198. NAD(+) contacts are provided by residues Asn199, 228–233, Glu251, Asn300, 321–323, and Asn375; these read GYGDVG and IGH.

This sequence belongs to the adenosylhomocysteinase family. It depends on NAD(+) as a cofactor.

Its subcellular location is the cytoplasm. The catalysed reaction is S-adenosyl-L-homocysteine + H2O = L-homocysteine + adenosine. The protein operates within amino-acid biosynthesis; L-homocysteine biosynthesis; L-homocysteine from S-adenosyl-L-homocysteine: step 1/1. Its function is as follows. May play a key role in the regulation of the intracellular concentration of adenosylhomocysteine. This Pseudomonas entomophila (strain L48) protein is Adenosylhomocysteinase.